The chain runs to 71 residues: Translation initiation factor IF-1 (71 aa).

The S1-like domain occupies 1–71; the sequence is MSKDDLIQFT…LTKGRVIHRH (71 aa).

The protein belongs to the IF-1 family. In terms of assembly, component of the 30S ribosomal translation pre-initiation complex which assembles on the 30S ribosome in the order IF-2 and IF-3, IF-1 and N-formylmethionyl-tRNA(fMet); mRNA recruitment can occur at any time during PIC assembly.

The protein localises to the cytoplasm. One of the essential components for the initiation of protein synthesis. Stabilizes the binding of IF-2 and IF-3 on the 30S subunit to which N-formylmethionyl-tRNA(fMet) subsequently binds. Helps modulate mRNA selection, yielding the 30S pre-initiation complex (PIC). Upon addition of the 50S ribosomal subunit IF-1, IF-2 and IF-3 are released leaving the mature 70S translation initiation complex. The protein is Translation initiation factor IF-1 of Rickettsia canadensis (strain McKiel).